Here is a 37-residue protein sequence, read N- to C-terminus: Large ribosomal subunit protein bL36B (37 aa).

Belongs to the bacterial ribosomal protein bL36 family.

In Saccharopolyspora erythraea (strain ATCC 11635 / DSM 40517 / JCM 4748 / NBRC 13426 / NCIMB 8594 / NRRL 2338), this protein is Large ribosomal subunit protein bL36B.